A 224-amino-acid chain; its full sequence is Charged multivesicular body protein 4b (224 aa).

The tract at residues 1–23 (MSVFGKLFGAGGGKAGKGGPTPQ) is disordered. Serine 2 bears the N-acetylserine mark. Residue lysine 6 is modified to N6-acetyllysine. A compositionally biased stretch (gly residues) spans 8-19 (FGAGGGKAGKGG). Positions 23–183 (QEAIQRLRDT…EELDKNLLEI (161 aa)) form a coiled coil. At lysine 114 the chain carries N6-acetyllysine. Phosphoserine is present on residues serine 184 and serine 223. The disordered stretch occupies residues 185–224 (GPETVPLPNVPSIALPSKPAKKKEEEDDDMKELENWAGSM).

The protein belongs to the SNF7 family. In terms of assembly, probable core component of the endosomal sorting required for transport complex III (ESCRT-III). ESCRT-III components are thought to multimerize to form a flat lattice on the perimeter membrane of the endosome. Several assembly forms of ESCRT-III may exist that interact and act sequentially. Interacts with CHMP6 and CHMP4C. Interacts with PDCD6IP; the interaction is direct. Interacts with VPS4A; the interaction is direct. Interacts with VPS4B; the interaction is direct. Interacts with CHMP7. Interacts with CFTR; the interaction requires misfolded CFTR. Interacts with PTPN23. Interacts with CC2D1B. ISGylated. Isgylation weakens its interaction with VPS4A. Widely expressed. Expressed at higher level in heart and skeletal muscle. Also expressed in brain, colon, thymus, spleen, kidney, liver, small intestine, placenta, lung and peripheral blood lymphocytes.

The protein localises to the cytoplasm. Its subcellular location is the cytosol. It localises to the late endosome membrane. It is found in the midbody. The protein resides in the nucleus envelope. In terms of biological role, probable core component of the endosomal sorting required for transport complex III (ESCRT-III) which is involved in multivesicular bodies (MVBs) formation and sorting of endosomal cargo proteins into MVBs. MVBs contain intraluminal vesicles (ILVs) that are generated by invagination and scission from the limiting membrane of the endosome and mostly are delivered to lysosomes enabling degradation of membrane proteins, such as stimulated growth factor receptors, lysosomal enzymes and lipids. The MVB pathway appears to require the sequential function of ESCRT-O, -I,-II and -III complexes. ESCRT-III proteins mostly dissociate from the invaginating membrane before the ILV is released. The ESCRT machinery also functions in topologically equivalent membrane fission events, such as the terminal stages of cytokinesis. Together with SPAST, the ESCRT-III complex promotes nuclear envelope sealing and mitotic spindle disassembly during late anaphase. Plays a role in the endosomal sorting pathway. ESCRT-III proteins are believed to mediate the necessary vesicle extrusion and/or membrane fission activities, possibly in conjunction with the AAA ATPase VPS4. When overexpressed, membrane-assembled circular arrays of CHMP4B filaments can promote or stabilize negative curvature and outward budding. CHMP4A/B/C are required for the exosomal release of SDCBP, CD63 and syndecan. Majority of the protein exists in a folded closed conformation. (Microbial infection) The ESCRT machinery also functions in topologically equivalent membrane fission events, such as the budding of enveloped viruses (HIV-1 and other lentiviruses). Via its interaction with PDCD6IP involved in HIV-1 p6- and p9-dependent virus release. This is Charged multivesicular body protein 4b (CHMP4B) from Homo sapiens (Human).